Here is a 524-residue protein sequence, read N- to C-terminus: PiggyBac transposable element-derived protein 5 (524 aa).

Positions 30–117 are disordered; sequence DDVFGESGPD…DTGGPTRKMP (88 aa). A compositionally biased stretch (low complexity) spans 47–59; sequence STSAASRSSSAAS. Residues 67–79 show a composition bias toward pro residues; that stretch reads PGPPGAAPPPPRA. Residues 98–108 are compositionally biased toward basic and acidic residues; it reads LRDRPPPRFED. Ser-521 carries the phosphoserine modification.

It localises to the nucleus. In terms of biological role, transposase that mediates sequence-specific genomic rearrangements. Can induce genomic rearrangements that inactivate the HPRT1 gene. The protein is PiggyBac transposable element-derived protein 5 (PGBD5) of Homo sapiens (Human).